A 434-amino-acid polypeptide reads, in one-letter code: Enolase (434 aa).

Phosphoenolpyruvate is bound at residue Ala-41. Gln-165 contributes to the (2R)-2-phosphoglycerate binding site. Catalysis depends on Glu-207, which acts as the Proton donor. Mg(2+) is bound by residues Asp-244, Glu-291, and Asp-318. Positions 343, 372, 373, and 394 each coordinate phosphoenolpyruvate. (2R)-2-phosphoglycerate contacts are provided by Lys-343, Arg-372, Ser-373, and Lys-394. Catalysis depends on Lys-343, which acts as the Proton acceptor.

The protein belongs to the enolase family. As to quaternary structure, homodimer and homooctamer; the homodimer is inactive. Mg(2+) serves as cofactor.

It localises to the cytoplasm. The protein resides in the secreted. It is found in the cell surface. It carries out the reaction (2R)-2-phosphoglycerate = phosphoenolpyruvate + H2O. It functions in the pathway carbohydrate degradation; glycolysis; pyruvate from D-glyceraldehyde 3-phosphate: step 4/5. Catalyzes the reversible conversion of 2-phosphoglycerate (2-PG) into phosphoenolpyruvate (PEP). It is essential for the degradation of carbohydrates via glycolysis. Functionally, 'Moonlights' as a laminin receptor. Binds laminin when expressed on the bacterial cell surface; this probably induces destruction of the extracellular matrix, favoring invasion and dissemination. This is Enolase from Staphylococcus aureus.